The primary structure comprises 626 residues: DNA-directed RNA polymerase subunit beta C-terminal section (626 aa).

Positions 287–307 (NTKSKNTGKGSKPPRASKAQN) are disordered.

This sequence belongs to the RNA polymerase beta chain family. In plastids the minimal PEP RNA polymerase catalytic core is composed of four subunits: alpha, beta, beta', and beta''. When a (nuclear-encoded) sigma factor is associated with the core the holoenzyme is formed, which can initiate transcription.

It localises to the plastid. It is found in the chloroplast. It carries out the reaction RNA(n) + a ribonucleoside 5'-triphosphate = RNA(n+1) + diphosphate. Functionally, DNA-dependent RNA polymerase catalyzes the transcription of DNA into RNA using the four ribonucleoside triphosphates as substrates. This Chlamydomonas reinhardtii (Chlamydomonas smithii) protein is DNA-directed RNA polymerase subunit beta C-terminal section (rpoB2).